The sequence spans 96 residues: ATP-dependent Clp protease adapter protein ClpS (96 aa).

This sequence belongs to the ClpS family. In terms of assembly, binds to the N-terminal domain of the chaperone ClpA.

In terms of biological role, involved in the modulation of the specificity of the ClpAP-mediated ATP-dependent protein degradation. This is ATP-dependent Clp protease adapter protein ClpS from Campylobacter jejuni subsp. jejuni serotype O:2 (strain ATCC 700819 / NCTC 11168).